The primary structure comprises 505 residues: ATP synthase subunit alpha (505 aa).

Residue 171-178 (GDRQTGKT) coordinates ATP.

This sequence belongs to the ATPase alpha/beta chains family. In terms of assembly, F-type ATPases have 2 components, CF(1) - the catalytic core - and CF(0) - the membrane proton channel. CF(1) has five subunits: alpha(3), beta(3), gamma(1), delta(1), epsilon(1). CF(0) has three main subunits: a(1), b(2) and c(9-12). The alpha and beta chains form an alternating ring which encloses part of the gamma chain. CF(1) is attached to CF(0) by a central stalk formed by the gamma and epsilon chains, while a peripheral stalk is formed by the delta and b chains.

It localises to the cell inner membrane. The catalysed reaction is ATP + H2O + 4 H(+)(in) = ADP + phosphate + 5 H(+)(out). Functionally, produces ATP from ADP in the presence of a proton gradient across the membrane. The alpha chain is a regulatory subunit. In Campylobacter concisus (strain 13826), this protein is ATP synthase subunit alpha.